The primary structure comprises 350 residues: tRNA uridine(34) hydroxylase (350 aa).

A Rhodanese domain is found at 146 to 240 (DDPDAVFIDM…YARRAREQGL (95 aa)). Catalysis depends on Cys-200, which acts as the Cysteine persulfide intermediate. Positions 319–328 (RRRRAGRENG) are enriched in basic and acidic residues. A disordered region spans residues 319–350 (RRRRAGRENGNKIFNKSRGRLNSKLSIPDPAE).

It belongs to the TrhO family.

The catalysed reaction is uridine(34) in tRNA + AH2 + O2 = 5-hydroxyuridine(34) in tRNA + A + H2O. In terms of biological role, catalyzes oxygen-dependent 5-hydroxyuridine (ho5U) modification at position 34 in tRNAs. The chain is tRNA uridine(34) hydroxylase from Salmonella schwarzengrund (strain CVM19633).